A 1232-amino-acid chain; its full sequence is MANGVIPPPGGASPLPQVRVPLEEPPLSPDVEEEDDDLGKTLAVSRFGDLISKPPAWDPEKPSRSYSERDFEFHRHTSHHTHHPLSARLPPPHKLRRLPPTSGRHTRRKRKKEKTSVPPSEGTPPIQEEGGAGVDEEEEEEEEEEGESEAEPVEPPPSGSPPKAKFSIGSDEDDSPGLPGRAAVTKPLPSVGPRTDKSPQHSGSFPSPRARASRLAGEKSRPWSPSASYDLRERLCPGSALGNPGGPEQQVPTDEAEAQMLGSADLDDMKSHRLEDNPGVRRHLVKKPSRTQGGRGSPSGLAPILRRKKKKKKLDRRPHEVFVELNELMLDRSQEPHWRETARWIKFEEDVEEETERWGKPHVASLSFRSLLELRRTIAHGAALLDLEQTTLPGIAHLVVETMIVSDQIRPEDRASVLRTLLLKHSHPNDDKDSGFFPRNPSSSSMNSVLGNHHPTPSHGPDGAVPTMADDLGEPAPLWPHDPDAKEKPLHMPGGDSHRGKSLKLLEKIPEDAEATVVLVGCVPFLEQPAAAFVRLNEAVLLESVLEVPVPVRFLFVMLGPSHTSTDYHELGRSIATLMSDKLFHEAAYQADDRQDLLSAISEFLDGSIVIPPSEVEGRDLLRSVAAFQRELLRKRREREQTKVEMTTRGGYTAPGKELSLELGGSEATPEDDPLLRTGSIFGGLVRDVRRRYPYYPSDLRDALHSQCVAAVLFIYFAALSPAITFGGLLGEKTEGLMGVSELIVSTAVLGVLFSLLGAQPLLVVGFSGPLLVFEEAFFKFCRAQDLEYLTGRVWVGLWLVVFVLALVAAEGSFLVRYISPFTQEIFAFLISLIFIYETFYKLYKVFTEHPLLPFYPPEGALEGSLEAGLEPNGSALPPTEGPRGPRNQPNTALLSLILMLGTFFIAFFLRKFRNSRFLGGKARRIIGDFGIPISILVMVLVDYSITDTYTQKLTVPTGLSVTSPDKRSWFIPPLGSARPFPPWMMVAAAVPALLVLILIFMETQITALIVSQKARRLLKGSGFHLDLLLIGSLGGLCGLFGLPWLTAATVRSVTHVNALTVMRTAIAPGDKPQIQEVREQRVTGVLIASLVGLSIVMGAVLRRIPLAVLFGIFLYMGVTSLSGIQLSQRLLLILMPAKHHPEQPYVTKVKTWRMHLFTCIQLGCIALLWVVKSTAASLAFPFLLLLTVPLRHCLLPRLFQDRELQALDSEDAEPNFDEDGQDEYNELHMPV.

A compositionally biased stretch (pro residues) spans 1–11; it reads MANGVIPPPGG. Disordered regions lie at residues 1 to 316 and 429 to 499; these read MANG…KLDR and NDDK…DSHR. Topologically, residues 1 to 708 are cytoplasmic; it reads MANGVIPPPG…DLRDALHSQC (708 aa). Residues 58-75 are compositionally biased toward basic and acidic residues; it reads DPEKPSRSYSERDFEFHR. 2 stretches are compositionally biased toward basic residues: residues 76 to 97 and 104 to 113; these read HTSH…KLRR and RHTRRKRKKE. Residues 134–152 are compositionally biased toward acidic residues; the sequence is VDEEEEEEEEEEGESEAEP. Phosphoserine is present on residues S167, S170, S175, and S198. Over residues 267 to 279 the composition is skewed to basic and acidic residues; it reads DDMKSHRLEDNPG. Over residues 280-289 the composition is skewed to basic residues; that stretch reads VRRHLVKKPS. R295 bears the Omega-N-methylarginine mark. Over residues 305–316 the composition is skewed to basic residues; sequence LRRKKKKKKLDR. Residues 440–450 show a composition bias toward polar residues; it reads NPSSSSMNSVL. Residues 481 to 499 show a composition bias toward basic and acidic residues; that stretch reads HDPDAKEKPLHMPGGDSHR. The next 5 membrane-spanning stretches (helical) occupy residues 709-731, 737-774, 794-816, 826-847, and 893-910; these read VAAV…GLLG, LMGV…LLVF, VWVG…SFLV, IFAF…YKVF, and ALLS…AFFL. The segment at 709-1232 is membrane (anion exchange); it reads VAAVLFIYFA…DEYNELHMPV (524 aa). The Cytoplasmic segment spans residues 911-925; it reads RKFRNSRFLGGKARR. Transmembrane regions (helical) follow at residues 926–946, 980–1002, 1028–1049, 1083–1128, and 1155–1191; these read IIGD…DYSI, PFPP…LIFM, LLLI…LTAA, VTGV…IQLS, and MHLF…TVPL. C1165 carries the S-palmitoyl cysteine lipid modification.

This sequence belongs to the anion exchanger (TC 2.A.31) family.

It localises to the cell membrane. It catalyses the reaction hydrogencarbonate(in) + chloride(out) = hydrogencarbonate(out) + chloride(in). In terms of biological role, sodium-independent anion exchanger which mediates the electroneutral exchange of chloride for bicarbonate ions across the cell membrane. May be involved in the regulation of intracellular pH, and the modulation of cardiac action potential. In Plecturocebus moloch (Dusky titi monkey), this protein is Anion exchange protein 3 (SLC4A3).